Consider the following 541-residue polypeptide: Carboxypeptidase Y homolog A (541 aa).

A signal peptide spans 1–17 (MKVATSALLIGAAAAQQ). Residues 18-125 (QQILKFPDSF…KLEQYSLRAK (108 aa)) constitute a propeptide that is removed on maturation. Intrachain disulfides connect Cys-179–Cys-418, Cys-313–Cys-327, Cys-337–Cys-360, Cys-344–Cys-353, and Cys-382–Cys-388. Asn-210 carries an N-linked (GlcNAc...) asparagine glycan. Ser-266 is a catalytic residue. The active site involves Asp-457. Asn-505 is a glycosylation site (N-linked (GlcNAc...) asparagine). Residue His-516 is part of the active site.

The protein belongs to the peptidase S10 family.

Its subcellular location is the vacuole. It catalyses the reaction Release of a C-terminal amino acid with broad specificity.. Vacuolar carboxypeptidase involved in degradation of small peptides. Digests preferentially peptides containing an aliphatic or hydrophobic residue in P1' position, as well as methionine, leucine or phenylalanine in P1 position of ester substrate. The sequence is that of Carboxypeptidase Y homolog A (cpyA) from Pyrenophora tritici-repentis (strain Pt-1C-BFP) (Wheat tan spot fungus).